The following is a 381-amino-acid chain: N-acetyldiaminopimelate deacetylase (381 aa).

Residue Asp-73 is part of the active site. Glu-132 (proton acceptor) is an active-site residue.

It belongs to the peptidase M20A family. N-acetyldiaminopimelate deacetylase subfamily.

The enzyme catalyses N-acetyl-(2S,6S)-2,6-diaminopimelate + H2O = (2S,6S)-2,6-diaminopimelate + acetate. It participates in amino-acid biosynthesis; L-lysine biosynthesis via DAP pathway; LL-2,6-diaminopimelate from (S)-tetrahydrodipicolinate (acetylase route): step 3/3. Catalyzes the conversion of N-acetyl-diaminopimelate to diaminopimelate and acetate. This chain is N-acetyldiaminopimelate deacetylase, found in Limosilactobacillus reuteri (strain DSM 20016) (Lactobacillus reuteri).